Consider the following 258-residue polypeptide: Tetraspanin-18B (258 aa).

Residues 1-25 (MGLGEASARGTSMEGDCLSCIKYLM) are Cytoplasmic-facing. Residues 26-46 (FVFNFLIFLGGSFLLGVGVWV) traverse the membrane as a helical segment. Residues 47-61 (VVDPTGFREIVAANP) are Extracellular-facing. The helical transmembrane segment at 62–82 (LLFTGVYIILAMGGMLFLLGF) threads the bilayer. Topologically, residues 83–94 (LGCCGAIRENKC) are cytoplasmic. Residues 95–115 (LLLFFFMLILIIFLAELAAAI) form a helical membrane-spanning segment. Residues 116 to 228 (LAFIFREHLT…SAVVDYFEMY (113 aa)) are Extracellular-facing. N-linked (GlcNAc...) asparagine glycosylation is present at asparagine 141. Residues 229–249 (IYVAGALAIVVLTIELFAMVF) traverse the membrane as a helical segment. Over 250–258 (AMCLFRGIQ) the chain is Cytoplasmic.

This sequence belongs to the tetraspanin (TM4SF) family.

It is found in the membrane. May regulate angiogenesis through KDR/VEGFR2 and NOTCH1 pathways. In Danio rerio (Zebrafish), this protein is Tetraspanin-18B (tspan18b).